We begin with the raw amino-acid sequence, 469 residues long: Argininosuccinate lyase (469 aa).

The protein belongs to the lyase 1 family. Argininosuccinate lyase subfamily.

It is found in the cytoplasm. It carries out the reaction 2-(N(omega)-L-arginino)succinate = fumarate + L-arginine. It functions in the pathway amino-acid biosynthesis; L-arginine biosynthesis; L-arginine from L-ornithine and carbamoyl phosphate: step 3/3. This is Argininosuccinate lyase from Mycolicibacterium smegmatis (strain ATCC 700084 / mc(2)155) (Mycobacterium smegmatis).